The chain runs to 88 residues: Small ribosomal subunit protein uS19 (88 aa).

Belongs to the universal ribosomal protein uS19 family.

Functionally, protein S19 forms a complex with S13 that binds strongly to the 16S ribosomal RNA. The sequence is that of Small ribosomal subunit protein uS19 (rpsS) from Chlamydia pneumoniae (Chlamydophila pneumoniae).